The following is a 495-amino-acid chain: Lysine--tRNA ligase (495 aa).

Mg(2+) is bound by residues E406 and E413.

The protein belongs to the class-II aminoacyl-tRNA synthetase family. Homodimer. Requires Mg(2+) as cofactor.

It is found in the cytoplasm. The catalysed reaction is tRNA(Lys) + L-lysine + ATP = L-lysyl-tRNA(Lys) + AMP + diphosphate. The sequence is that of Lysine--tRNA ligase from Leptospira borgpetersenii serovar Hardjo-bovis (strain JB197).